Reading from the N-terminus, the 541-residue chain is Membrane protein insertase YidC (541 aa).

The next 5 helical transmembrane spans lie at 7-27 (LFLV…QTDH), 340-360 (QLIH…TFIV), 415-435 (LGGC…YYML), 453-473 (LAAP…MFFI), and 494-514 (PVIF…YYIV).

Belongs to the OXA1/ALB3/YidC family. Type 1 subfamily. As to quaternary structure, interacts with the Sec translocase complex via SecD. Specifically interacts with transmembrane segments of nascent integral membrane proteins during membrane integration.

The protein resides in the cell inner membrane. Its function is as follows. Required for the insertion and/or proper folding and/or complex formation of integral membrane proteins into the membrane. Involved in integration of membrane proteins that insert both dependently and independently of the Sec translocase complex, as well as at least some lipoproteins. Aids folding of multispanning membrane proteins. The polypeptide is Membrane protein insertase YidC (Edwardsiella ictaluri (strain 93-146)).